The chain runs to 184 residues: Crossover junction endodeoxyribonuclease RuvC (184 aa).

Catalysis depends on residues D7, E68, and D141. 3 residues coordinate Mg(2+): D7, E68, and D141.

Belongs to the RuvC family. Homodimer which binds Holliday junction (HJ) DNA. The HJ becomes 2-fold symmetrical on binding to RuvC with unstacked arms; it has a different conformation from HJ DNA in complex with RuvA. In the full resolvosome a probable DNA-RuvA(4)-RuvB(12)-RuvC(2) complex forms which resolves the HJ. Mg(2+) serves as cofactor.

The protein localises to the cytoplasm. It catalyses the reaction Endonucleolytic cleavage at a junction such as a reciprocal single-stranded crossover between two homologous DNA duplexes (Holliday junction).. The RuvA-RuvB-RuvC complex processes Holliday junction (HJ) DNA during genetic recombination and DNA repair. Endonuclease that resolves HJ intermediates. Cleaves cruciform DNA by making single-stranded nicks across the HJ at symmetrical positions within the homologous arms, yielding a 5'-phosphate and a 3'-hydroxyl group; requires a central core of homology in the junction. The consensus cleavage sequence is 5'-(A/T)TT(C/G)-3'. Cleavage occurs on the 3'-side of the TT dinucleotide at the point of strand exchange. HJ branch migration catalyzed by RuvA-RuvB allows RuvC to scan DNA until it finds its consensus sequence, where it cleaves and resolves the cruciform DNA. This chain is Crossover junction endodeoxyribonuclease RuvC, found in Mycobacterium ulcerans (strain Agy99).